A 333-amino-acid chain; its full sequence is Eukaryotic translation initiation factor 3 subunit I (333 aa).

WD repeat units follow at residues 8 to 47 (GHERSITQIKYNREGDLLFTVAKDPIVNVWYSVNGERLGT), 50 to 91 (GHTG…ALLK), 144 to 183 (CNDSKITSAVWGPLGECIIAGHESGELNQYSAKSGEVLVN), and 186 to 225 (EHSRQINDIQLSREMTMFVTASKDNTAKLFDSTTLEHQKT). Thr-219 carries the phosphothreonine modification. Lys-264 is subject to N6-acetyllysine. Residue Lys-282 forms a Glycyl lysine isopeptide (Lys-Gly) (interchain with G-Cter in ubiquitin) linkage. A WD 5 repeat occupies 283–324 (GHFGPINSVAFHPDGKSYSSGGEDGYVRIHYFDPQYFEFEFE). Tyr-308 bears the Phosphotyrosine mark.

This sequence belongs to the eIF-3 subunit I family. In terms of assembly, component of the eukaryotic translation initiation factor 3 (eIF-3) complex, which is composed of 13 subunits: EIF3A, EIF3B, EIF3C, EIF3D, EIF3E, EIF3F, EIF3G, EIF3H, EIF3I, EIF3J, EIF3K, EIF3L and EIF3M. The eIF-3 complex appears to include 3 stable modules: module A is composed of EIF3A, EIF3B, EIF3G and EIF3I; module B is composed of EIF3F, EIF3H, and EIF3M; and module C is composed of EIF3C, EIF3D, EIF3E, EIF3K and EIF3L. EIF3C of module C binds EIF3B of module A and EIF3H of module B, thereby linking the three modules. EIF3J is a labile subunit that binds to the eIF-3 complex via EIF3B. The eIF-3 complex interacts with RPS6KB1 under conditions of nutrient depletion. Mitogenic stimulation leads to binding and activation of a complex composed of MTOR and RPTOR, leading to phosphorylation and release of RPS6KB1 and binding of EIF4B to eIF-3. Phosphorylated by TGF-beta type II receptor.

It is found in the cytoplasm. In terms of biological role, component of the eukaryotic translation initiation factor 3 (eIF-3) complex, which is required for several steps in the initiation of protein synthesis. The eIF-3 complex associates with the 40S ribosome and facilitates the recruitment of eIF-1, eIF-1A, eIF-2:GTP:methionyl-tRNAi and eIF-5 to form the 43S pre-initiation complex (43S PIC). The eIF-3 complex stimulates mRNA recruitment to the 43S PIC and scanning of the mRNA for AUG recognition. The eIF-3 complex is also required for disassembly and recycling of post-termination ribosomal complexes and subsequently prevents premature joining of the 40S and 60S ribosomal subunits prior to initiation. The eIF-3 complex specifically targets and initiates translation of a subset of mRNAs involved in cell proliferation, including cell cycling, differentiation and apoptosis, and uses different modes of RNA stem-loop binding to exert either translational activation or repression. This is Eukaryotic translation initiation factor 3 subunit I from Oryctolagus cuniculus (Rabbit).